Here is a 106-residue protein sequence, read N- to C-terminus: Toxin-like structure LSTX-D6 (106 aa).

The N-terminal stretch at 1-20 (MMKVLVVAALLVTLISYSSS) is a signal peptide. Residues 21–41 (EGIDDLEADELLSLMANEQTR) constitute a propeptide that is removed on maturation. 4 disulfides stabilise this stretch: cysteine 45–cysteine 60, cysteine 52–cysteine 69, cysteine 59–cysteine 85, and cysteine 71–cysteine 83.

Belongs to the neurotoxin 19 (CSTX) family. 02 (D7) subfamily. Expressed by the venom gland.

The protein resides in the secreted. The chain is Toxin-like structure LSTX-D6 from Lycosa singoriensis (Wolf spider).